Reading from the N-terminus, the 216-residue chain is Somatotropin (216 aa).

A signal peptide spans 1-26 (MAADSQTPWLLTFSLLCLLWPQEAGA). Residue His45 coordinates Zn(2+). Cys78 and Cys189 form a disulfide bridge. Phosphoserine is present on Ser131. Residue Glu198 coordinates Zn(2+). Cysteines 206 and 214 form a disulfide.

The protein belongs to the somatotropin/prolactin family.

It is found in the secreted. Its function is as follows. Plays an important role in growth control. Its major role in stimulating body growth is to stimulate the liver and other tissues to secrete IGF1. It stimulates both the differentiation and proliferation of myoblasts. It also stimulates amino acid uptake and protein synthesis in muscle and other tissues. In Rattus norvegicus (Rat), this protein is Somatotropin (Gh1).